The sequence spans 269 residues: L-cystine-binding protein TcyJ (269 aa).

Positions 1 to 20 (MNKRKGLVLLLSVFALLGGG) are cleaved as a signal peptide. Cys-21 carries N-palmitoyl cysteine lipidation. Residue Cys-21 is the site of S-diacylglycerol cysteine attachment.

Belongs to the bacterial solute-binding protein 3 family. In terms of assembly, the complex is composed of two ATP-binding proteins (TcyN), two transmembrane proteins (TcyL and TcyM) and two solute-binding proteins (TcyJ and TcyK).

It localises to the cell membrane. Functionally, part of the ABC transporter complex TcyJKLMN involved in L-cystine import. Is also involved in cystathionine, djenkolate, and S-methylcysteine transport. This is L-cystine-binding protein TcyJ (tcyJ) from Bacillus subtilis (strain 168).